Reading from the N-terminus, the 274-residue chain is Copper chaperone for superoxide dismutase (274 aa).

An HMA domain is found at 11–74 (MCALEFTVQM…LLESTGRQAV (64 aa)). Cu cation contacts are provided by Cys-22 and Cys-25. Lys-76 participates in a covalent cross-link: Glycyl lysine isopeptide (Lys-Gly) (interchain with G-Cter in ubiquitin). Residues 88–234 (AAVAIMEGSG…LACGIIARSA (147 aa)) are superoxide dismutase-like. A disulfide bridge connects residues Cys-141 and Cys-227. Positions 147, 155, 164, and 167 each coordinate Zn(2+). Residues Lys-189, Lys-216, and Lys-241 each participate in a glycyl lysine isopeptide (Lys-Gly) (interchain with G-Cter in ubiquitin) cross-link. Cu cation contacts are provided by Cys-244 and Cys-246. The residue at position 267 (Ser-267) is a Phosphoserine.

The protein in the C-terminal section; belongs to the Cu-Zn superoxide dismutase family. As to quaternary structure, homodimer, and heterodimer with SOD1. Interacts with COMMD1. Interacts with XIAP/BIRC4. Interacts with SLC31A1(via C-terminal domain); this interaction is Cu(1+)-mediated. The heterodimer CCS:SOD1 interacts with SLC31A1; this heterotrimer is Cu(1+)-mediated and its maintenance is regulated through SOD1 activation. Cu(2+) serves as cofactor. Zn(2+) is required as a cofactor. Post-translationally, ubiquitinion by XIAP/BIRC4 leads to enhancement of its chaperone activity toward its physiologic target, SOD1, rather than proteasomal degradation. XIAP/BIRC4 preferentially ubiquitinates at Lys-241.

It is found in the cytoplasm. In terms of biological role, delivers copper to copper zinc superoxide dismutase (SOD1). The chain is Copper chaperone for superoxide dismutase from Rattus norvegicus (Rat).